A 2053-amino-acid chain; its full sequence is Cell adhesion molecule DSCAML1 (2053 aa).

A signal peptide spans 1-18 (MWLVTFLLLLDSLHKARP). Ig-like C2-type domains follow at residues 19-119 (EDVG…NIRI), 115-217 (PNIR…ARLS), 226-310 (PTIL…GILT), 314-396 (PLHV…QTAQ), 408-501 (PRIV…ARIN), 506-586 (PSIR…LSIS), 596-685 (PPLI…RQLI), 690-784 (PRFV…MFLT), and 788-885 (PAMI…LTVQ). Residues 19–1591 (EDVGTSLYFV…AQGEGDDVKK (1573 aa)) are Extracellular-facing. Intrachain disulfides connect C47–C103, C146–C198, C247–C294, C336–C386, C429–C485, C526–C575, and C617–C669. N79 carries an N-linked (GlcNAc...) asparagine glycan. 2 N-linked (GlcNAc...) asparagine glycosylation sites follow: N368 and N471. Residues N666 and N710 are each glycosylated (N-linked (GlcNAc...) asparagine). A disulfide bridge connects residues C711 and C767. N-linked (GlcNAc...) asparagine glycosylation is present at N809. C810 and C867 are oxidised to a cystine. 4 Fibronectin type-III domains span residues 887 to 984 (PPDP…TEEA), 989 to 1088 (PPMD…TLED), 1093 to 1189 (PPEN…TKED), and 1193 to 1288 (PPAG…AGKA). Residues N1144 and N1162 are each glycosylated (N-linked (GlcNAc...) asparagine). Residues 1278 to 1377 (EKVTIEPAGK…TGGFDTIIVN (100 aa)) enclose the Ig-like C2-type 10 domain. The cysteines at positions 1311 and 1363 are disulfide-linked. Residue N1345 is glycosylated (N-linked (GlcNAc...) asparagine). Fibronectin type-III domains are found at residues 1383 to 1477 (PPDQ…THGR) and 1478 to 1578 (EPSF…TIPP). A glycan (N-linked (GlcNAc...) asparagine) is linked at N1561. A helical membrane pass occupies residues 1592–1612 (LFTIGCPVILATLGVALLFVV). The Cytoplasmic portion of the chain corresponds to 1613–2053 (RKKRKEKRLK…GAYSKSYTLV (441 aa)). 4 disordered regions span residues 1716–1741 (LIDM…HSTR), 1773–1803 (HGVT…STES), 1840–1862 (SSDQ…STPS), and 1974–2053 (LAMP…YTLV). Basic residues predominate over residues 1732–1741 (KNVKSAHSTR). Over residues 1773 to 1789 (HGVTVTESDSYSASLSQ) the composition is skewed to polar residues. Residues 1977–1993 (PAPPAGTAPPAPGPTPS) show a composition bias toward pro residues.

In terms of assembly, homodimer; mediates homophilic interactions to promote cell adhesion. As to expression, in the retina, expressed in the rod photoreceptors, AII amacrine cells and rod bipolar cells (at protein level).

The protein localises to the cell membrane. It is found in the synapse. Its function is as follows. Cell adhesion molecule that plays a role in neuronal self-avoidance. Promotes repulsion between specific neuronal processes of either the same cell or the same subtype of cells. Promotes both isoneuronal self-avoidance for creating an orderly neurite arborization in retinal rod bipolar cells and heteroneuronal self-avoidance to maintain mosaic spacing between AII amacrine cells. Adhesion molecule that promotes lamina-specific synaptic connections in the retina: expressed in specific subsets of interneurons and retinal ganglion cells (RGCs) and promotes synaptic connectivity via homophilic interactions. The protein is Cell adhesion molecule DSCAML1 (Dscaml1) of Mus musculus (Mouse).